A 308-amino-acid chain; its full sequence is MDLSASRSDGGDPLRPASPRLRSPVSDGGDPLRPASPRLRSPVSDGGDPLRPASPRLRSPLGASRPVVGLTAYLEQVRTGVWDIPAGYLPADYFEGITMAGGVAVLLPPQPVDPESVGCVLDSLHALVITGGYDLDPAAYGQEPHPATDHPRPGRDAWEFALLRGALQRGMPVLGICRGTQVLNVALGGTLHQHLPDILGHSGHRAGNGVFTRLPVHTASGTRLAELIGESADVPCYHHQAIDQVGEGLVVSAVDVDGVIEALELPGDTFVLAVQWHPEKSLDDLRLFKALVDAASGYAGRQSQAEPR.

Positions 1-62 (MDLSASRSDG…ASPRLRSPLG (62 aa)) are disordered. Composition is skewed to low complexity over residues 13-24 (PLRPASPRLRSP), 31-42 (PLRPASPRLRSP), and 49-61 (PLRPASPRLRSPL). The 224-residue stretch at 78–301 (RTGVWDIPAG…VDAASGYAGR (224 aa)) folds into the Glutamine amidotransferase type-1 domain. The Nucleophile role is filled by cysteine 177. Residues histidine 277 and glutamate 279 contribute to the active site. Lysine 289 is covalently cross-linked (Isoglutamyl lysine isopeptide (Lys-Gln) (interchain with Q-Cter in protein Pup)).

This is Putative glutamine amidotransferase Rv2859c from Mycobacterium tuberculosis (strain ATCC 25618 / H37Rv).